The primary structure comprises 500 residues: UBX domain-containing protein 5 (500 aa).

The segment covering 50–61 has biased composition (low complexity); the sequence is SNNTPTPSNSTP. The disordered stretch occupies residues 50–70; the sequence is SNNTPTPSNSTPMAPTSVDSD. Residue Ser-139 is modified to Phosphoserine. 2 disordered regions span residues 142–169 and 371–399; these read NQRL…EEND and ESLN…QEPD. Residues 148-161 show a composition bias toward low complexity; sequence TNTNTYINDNSSDS. The 79-residue stretch at 415–493 folds into the UBX domain; sequence KPGITTRIQI…GLKNSSLLLE (79 aa).

In terms of assembly, interacts with CDC48.

It localises to the nucleus. It is found in the cytoplasm. Its function is as follows. Involved in CDC48-dependent protein degradation through the ubiquitin/proteasome pathway. In Saccharomyces cerevisiae (strain ATCC 204508 / S288c) (Baker's yeast), this protein is UBX domain-containing protein 5 (UBX5).